A 414-amino-acid polypeptide reads, in one-letter code: Gamma-glutamyl phosphate reductase (414 aa).

This sequence belongs to the gamma-glutamyl phosphate reductase family.

The protein resides in the cytoplasm. It carries out the reaction L-glutamate 5-semialdehyde + phosphate + NADP(+) = L-glutamyl 5-phosphate + NADPH + H(+). It functions in the pathway amino-acid biosynthesis; L-proline biosynthesis; L-glutamate 5-semialdehyde from L-glutamate: step 2/2. Its function is as follows. Catalyzes the NADPH-dependent reduction of L-glutamate 5-phosphate into L-glutamate 5-semialdehyde and phosphate. The product spontaneously undergoes cyclization to form 1-pyrroline-5-carboxylate. This Thermoanaerobacter pseudethanolicus (strain ATCC 33223 / 39E) (Clostridium thermohydrosulfuricum) protein is Gamma-glutamyl phosphate reductase.